Consider the following 654-residue polypeptide: Pheromone-processing carboxypeptidase KEX1 (654 aa).

Positions 1–18 are cleaved as a signal peptide; the sequence is MIVRLFWLAVLWLALANA. The Lumenal segment spans residues 19-533; the sequence is NPLKRLNHVW…TESHATRIVR (515 aa). N-linked (GlcNAc...) asparagine glycans are attached at residues N69 and N89. Catalysis depends on residues S188 and D395. A glycan (N-linked (GlcNAc...) asparagine) is linked at N442. Residue H453 is part of the active site. Residues 484–500 are compositionally biased toward polar residues; the sequence is QAKKTNANQNDSPSASE. Residues 484–526 are disordered; it reads QAKKTNANQNDSPSASENDNESGRTSESASSSPSESAATETES. Residue N503 is glycosylated (N-linked (GlcNAc...) asparagine). Over residues 508–523 the composition is skewed to low complexity; that stretch reads TSESASSSPSESAATE. The helical transmembrane segment at 534 to 554 threads the bilayer; the sequence is LIQLAVIIILIWGLCAIYSTY. Residues 555–654 lie on the Cytoplasmic side of the membrane; sequence RSKPTSIIKT…ENAHEHTEEH (100 aa). A disordered region spans residues 606 to 654; that stretch reads PVDIELGPTDGMDDASSDSGPSNVGTAETPEFVIASDDEENAHEHTEEH. The segment covering 622–631 has biased composition (polar residues); it reads SDSGPSNVGT.

Belongs to the peptidase S10 family.

The protein resides in the golgi apparatus. It is found in the trans-Golgi network membrane. The enzyme catalyses Preferential release of a C-terminal arginine or lysine residue.. Its function is as follows. Protease with a carboxypeptidase B-like function involved in the C-terminal processing of the lysine and arginine residues from protein precursors. Promotes cell fusion and is involved in the programmed cell death. This Clavispora lusitaniae (strain ATCC 42720) (Yeast) protein is Pheromone-processing carboxypeptidase KEX1 (KEX1).